Consider the following 187-residue polypeptide: UPF0232 protein JTY_0004 (187 aa).

Composition is skewed to basic and acidic residues over residues 1–17 and 24–45; these read MTGS…ERSM and LVRR…DAGR. Disordered stretches follow at residues 1–75 and 168–187; these read MTGS…DPQP and PSWR…DTYG.

It belongs to the UPF0232 family.

The sequence is that of UPF0232 protein JTY_0004 from Mycobacterium bovis (strain BCG / Tokyo 172 / ATCC 35737 / TMC 1019).